Consider the following 793-residue polypeptide: uncharacterized protein (793 aa).

The signal sequence occupies residues Met1–Ala22. Residue Cys23 is the site of N-palmitoyl cysteine attachment. Cys23 carries the S-diacylglycerol cysteine lipid modification. Disordered regions lie at residues Leu181–Val200, Lys212–Val264, and Lys444–Asn504. The span at Lys212–Gly227 shows a compositional bias: basic and acidic residues. Residues Ala237–Gln246 are compositionally biased toward polar residues. Positions Thr247–Val264 are enriched in basic and acidic residues. Polar residues predominate over residues Asn449–Leu468. Residues Glu472–Ser485 show a composition bias toward basic and acidic residues. Positions Lys491–Asn504 are enriched in low complexity.

It belongs to the MG185/MG260 family.

The protein localises to the cell membrane. This is an uncharacterized protein from Mycoplasma pneumoniae (strain ATCC 29342 / M129 / Subtype 1) (Mycoplasmoides pneumoniae).